A 152-amino-acid chain; its full sequence is Lipoprotein signal peptidase (152 aa).

Transmembrane regions (helical) follow at residues 5–25, 61–81, and 84–104; these read LFVL…FWIV, WFFV…LATH, and LNIW…GNFI. Active-site residues include Asp114 and Asp130. Residues 125 to 145 form a helical membrane-spanning segment; that stretch reads IFNVADSYLTVGVILLLICLW.

This sequence belongs to the peptidase A8 family.

Its subcellular location is the cell membrane. The catalysed reaction is Release of signal peptides from bacterial membrane prolipoproteins. Hydrolyzes -Xaa-Yaa-Zaa-|-(S,diacylglyceryl)Cys-, in which Xaa is hydrophobic (preferably Leu), and Yaa (Ala or Ser) and Zaa (Gly or Ala) have small, neutral side chains.. Its pathway is protein modification; lipoprotein biosynthesis (signal peptide cleavage). Its function is as follows. This protein specifically catalyzes the removal of signal peptides from prolipoproteins. The polypeptide is Lipoprotein signal peptidase (Streptococcus pyogenes serotype M1).